A 450-amino-acid polypeptide reads, in one-letter code: Phosphoglucosamine mutase (450 aa).

Ser97 (phosphoserine intermediate) is an active-site residue. Mg(2+) is bound by residues Ser97, Asp236, Asp238, and Asp240. Ser97 is subject to Phosphoserine.

The protein belongs to the phosphohexose mutase family. Mg(2+) is required as a cofactor. Activated by phosphorylation.

It carries out the reaction alpha-D-glucosamine 1-phosphate = D-glucosamine 6-phosphate. Catalyzes the conversion of glucosamine-6-phosphate to glucosamine-1-phosphate. This is Phosphoglucosamine mutase from Prochlorococcus marinus (strain AS9601).